The primary structure comprises 160 residues: Cytochrome b6-f complex subunit 4 (160 aa).

3 helical membrane passes run 36–56 (LLYIFPVVILGTIACNVGLAV), 95–115 (LLGVLLMVSVPTGLLTVPFLE), and 131–151 (TVFLIGTAVALWLGIGATLPI).

It belongs to the cytochrome b family. PetD subfamily. As to quaternary structure, the 4 large subunits of the cytochrome b6-f complex are cytochrome b6, subunit IV (17 kDa polypeptide, petD), cytochrome f and the Rieske protein, while the 4 small subunits are petG, petL, petM and petN. The complex functions as a dimer.

The protein localises to the plastid. It is found in the chloroplast thylakoid membrane. Functionally, component of the cytochrome b6-f complex, which mediates electron transfer between photosystem II (PSII) and photosystem I (PSI), cyclic electron flow around PSI, and state transitions. The protein is Cytochrome b6-f complex subunit 4 of Saccharum hybrid (Sugarcane).